Reading from the N-terminus, the 526-residue chain is Peptide chain release factor 3 (526 aa).

The region spanning 8–277 (NKRRTFAIIS…GLTEWAPKPQ (270 aa)) is the tr-type G domain. GTP is bound by residues 17 to 24 (SHPDAGKT), 85 to 89 (DTPGH), and 139 to 142 (NKLD).

It belongs to the TRAFAC class translation factor GTPase superfamily. Classic translation factor GTPase family. PrfC subfamily.

It is found in the cytoplasm. In terms of biological role, increases the formation of ribosomal termination complexes and stimulates activities of RF-1 and RF-2. It binds guanine nucleotides and has strong preference for UGA stop codons. It may interact directly with the ribosome. The stimulation of RF-1 and RF-2 is significantly reduced by GTP and GDP, but not by GMP. This chain is Peptide chain release factor 3, found in Actinobacillus pleuropneumoniae serotype 5b (strain L20).